Reading from the N-terminus, the 171-residue chain is NADH-quinone oxidoreductase subunit B (171 aa).

[4Fe-4S] cluster contacts are provided by C34, C35, C99, and C128.

It belongs to the complex I 20 kDa subunit family. NDH-1 is composed of 14 different subunits. Subunits NuoB, C, D, E, F, and G constitute the peripheral sector of the complex. [4Fe-4S] cluster serves as cofactor.

The protein resides in the cell inner membrane. It catalyses the reaction a quinone + NADH + 5 H(+)(in) = a quinol + NAD(+) + 4 H(+)(out). NDH-1 shuttles electrons from NADH, via FMN and iron-sulfur (Fe-S) centers, to quinones in the respiratory chain. The immediate electron acceptor for the enzyme in this species is believed to be ubiquinone. Couples the redox reaction to proton translocation (for every two electrons transferred, four hydrogen ions are translocated across the cytoplasmic membrane), and thus conserves the redox energy in a proton gradient. The polypeptide is NADH-quinone oxidoreductase subunit B (Sulfurihydrogenibium sp. (strain YO3AOP1)).